A 311-amino-acid chain; its full sequence is Probable manganese-dependent inorganic pyrophosphatase (311 aa).

H9, D13, D15, D75, H97, and D149 together coordinate Mn(2+).

It belongs to the PPase class C family. The cofactor is Mn(2+).

It is found in the cytoplasm. The catalysed reaction is diphosphate + H2O = 2 phosphate + H(+). The sequence is that of Probable manganese-dependent inorganic pyrophosphatase from Shouchella clausii (strain KSM-K16) (Alkalihalobacillus clausii).